The sequence spans 462 residues: Cytochrome P450 20A1 (462 aa).

Residues Phe-4–Pro-24 traverse the membrane as a helical segment. Cys-409 provides a ligand contact to heme.

The protein belongs to the cytochrome P450 family. Requires heme as cofactor.

The protein resides in the membrane. This is Cytochrome P450 20A1 (Cyp20a1) from Mus musculus (Mouse).